Consider the following 330-residue polypeptide: Anthranilate phosphoribosyltransferase (330 aa).

Residues Gly75, 78–79, Thr83, 85–88, 103–111, and Ala115 contribute to the 5-phospho-alpha-D-ribose 1-diphosphate site; these read GD, NVST, and KHGNRAASS. Position 75 (Gly75) interacts with anthranilate. A Mg(2+)-binding site is contributed by Ser87. Asn106 provides a ligand contact to anthranilate. Residue Arg161 coordinates anthranilate. 2 residues coordinate Mg(2+): Asp220 and Glu221.

The protein belongs to the anthranilate phosphoribosyltransferase family. Homodimer. Mg(2+) serves as cofactor.

It catalyses the reaction N-(5-phospho-beta-D-ribosyl)anthranilate + diphosphate = 5-phospho-alpha-D-ribose 1-diphosphate + anthranilate. It participates in amino-acid biosynthesis; L-tryptophan biosynthesis; L-tryptophan from chorismate: step 2/5. In terms of biological role, catalyzes the transfer of the phosphoribosyl group of 5-phosphorylribose-1-pyrophosphate (PRPP) to anthranilate to yield N-(5'-phosphoribosyl)-anthranilate (PRA). The polypeptide is Anthranilate phosphoribosyltransferase (Novosphingobium aromaticivorans (strain ATCC 700278 / DSM 12444 / CCUG 56034 / CIP 105152 / NBRC 16084 / F199)).